The chain runs to 209 residues: Probable spore germination lipoprotein YlaJ (209 aa).

The N-terminal stretch at M1–A16 is a signal peptide. A lipid anchor (N-palmitoyl cysteine) is attached at C17. C17 carries the S-diacylglycerol cysteine lipid modification. Disordered stretches follow at residues Q26–G54 and N165–D209. 2 stretches are compositionally biased toward basic and acidic residues: residues V28 to G54 and L183 to D209.

The protein resides in the forespore inner membrane. Its function is as follows. Probably contributes, directly or indirectly, to early events in germination. The protein is Probable spore germination lipoprotein YlaJ (ylaJ) of Bacillus subtilis (strain 168).